A 516-amino-acid polypeptide reads, in one-letter code: MEPAVSLAVCALLFLLWVRLKGLEFVLIHQRWVFVCLFLLPLSLIFDIYYYVRAWVVFKLSSAPRLHEQRVRDIQKQVREWKEQGSKTFMCTGRPGWLTVSLRVGKYKKTHKNIMINLMDILEVDTKKQIVRVEPLVTMGQVTALLTSIGWTLPVLPELDDLTVGGLIMGTGIESSSHKYGLFQHICTAYELVLADGSFVRCTPSENSDLFYAVPWSCGTLGFLVAAEIRIIPAKKYVKLRFEPVRGLEAICAKFTHESQRQENHFVEGLLYSLDEAVIMTGVMTDEAEPSKLNSIGNYYKPWFFKHVENYLKTNREGLEYIPLRHYYHRHTRSIFWELQDIIPFGNNPIFRYLFGWMVPPKISLLKLTQGETLRKLYEQHHVVQDMLVPMKCLQQALHTFQNDIHVYPIWLCPFILPSQPGLVHPKGNEAELYIDIGAYGEPRVKHFEARSCMRQLEKFVRSVHGFQMLYADCYMNREEFWEMFDGSLYHKLREKLGCQDAFPEVYDKICKAARH.

Residues 1-22 (MEPAVSLAVCALLFLLWVRLKG) form the signal peptide. Residues 23–31 (LEFVLIHQR) lie on the Lumenal side of the membrane. The chain crosses the membrane as a helical span at residues 32–52 (WVFVCLFLLPLSLIFDIYYYV). Over 53-516 (RAWVVFKLSS…YDKICKAARH (464 aa)) the chain is Cytoplasmic. The FAD-binding PCMH-type domain maps to 58 to 234 (FKLSSAPRLH…VAAEIRIIPA (177 aa)). 163 to 175 (TVGGLIMGTGIES) lines the FAD pocket.

Belongs to the FAD-binding oxidoreductase/transferase type 4 family. Interacts with DHCR7; this interaction regulates DHCR7 activity. It depends on FAD as a cofactor. In terms of tissue distribution, highly expressed in brain and adrenal gland with moderate expression in liver, lung, spleen, prostate and spinal cord. Low expression in heart, uterus and prostate. Undetectable in blood cells. In the brain, strongly expressed in cortical regions, substantia nigra, caudate nucleus, hippocampus, medulla oblongata and pons. In brains affected by Alzheimer disease, expression in the inferior temporal lobe is substantially lower than in the frontal cortex.

The protein resides in the endoplasmic reticulum membrane. The protein localises to the golgi apparatus membrane. The catalysed reaction is cholesterol + NADP(+) = desmosterol + NADPH + H(+). The enzyme catalyses lanosterol + NADPH + H(+) = 24,25-dihydrolanosterol + NADP(+). It catalyses the reaction 5alpha-cholest-8-en-3beta-ol + NADP(+) = zymosterol + NADPH + H(+). It functions in the pathway steroid biosynthesis; cholesterol biosynthesis. Its function is as follows. Catalyzes the reduction of the delta-24 double bond of sterol intermediates during cholesterol biosynthesis. In addition to its cholesterol-synthesizing activity, can protect cells from oxidative stress by reducing caspase 3 activity during apoptosis induced by oxidative stress. Also protects against amyloid-beta peptide-induced apoptosis. This chain is Delta(24)-sterol reductase (DHCR24), found in Homo sapiens (Human).